We begin with the raw amino-acid sequence, 262 residues long: uncharacterized protein (262 aa).

The protein belongs to the BtpA family.

This is an uncharacterized protein from Pyrococcus furiosus (strain ATCC 43587 / DSM 3638 / JCM 8422 / Vc1).